The following is a 154-amino-acid chain: Transcriptional repressor NrdR (154 aa).

The segment at 3–34 (CPFCGANDTKVIDSRLVAEGEQVRRRRECLAC) is a zinc-finger region. Residues 49-139 (PRLIKQDGSR…VYRRFQDLNE (91 aa)) form the ATP-cone domain.

This sequence belongs to the NrdR family. Zn(2+) is required as a cofactor.

Functionally, negatively regulates transcription of bacterial ribonucleotide reductase nrd genes and operons by binding to NrdR-boxes. The sequence is that of Transcriptional repressor NrdR from Pseudomonas savastanoi pv. phaseolicola (strain 1448A / Race 6) (Pseudomonas syringae pv. phaseolicola (strain 1448A / Race 6)).